Reading from the N-terminus, the 254-residue chain is Sugar fermentation stimulation protein homolog (254 aa).

Belongs to the SfsA family.

In Parasynechococcus marenigrum (strain WH8102), this protein is Sugar fermentation stimulation protein homolog.